Reading from the N-terminus, the 373-residue chain is Flagellar P-ring protein (373 aa).

Positions Met1–Ala26 are cleaved as a signal peptide.

Belongs to the FlgI family. The basal body constitutes a major portion of the flagellar organelle and consists of four rings (L,P,S, and M) mounted on a central rod.

Its subcellular location is the periplasm. The protein localises to the bacterial flagellum basal body. In terms of biological role, assembles around the rod to form the L-ring and probably protects the motor/basal body from shearing forces during rotation. This chain is Flagellar P-ring protein, found in Rhizobium etli (strain ATCC 51251 / DSM 11541 / JCM 21823 / NBRC 15573 / CFN 42).